We begin with the raw amino-acid sequence, 313 residues long: D-alanine--D-alanine ligase (313 aa).

The 201-residue stretch at 108-308 (KLVWQQLGIP…YQELVVGVLA (201 aa)) folds into the ATP-grasp domain. Position 138–193 (138–193 (VAKLGLPLFVKPASEGSSVAVIKVKSADALPAALIEAVKYDKIVVVEKSVEGGGEY)) interacts with ATP. Mg(2+) contacts are provided by aspartate 262, glutamate 275, and asparagine 277.

It belongs to the D-alanine--D-alanine ligase family. It depends on Mg(2+) as a cofactor. Requires Mn(2+) as cofactor.

Its subcellular location is the cytoplasm. It catalyses the reaction 2 D-alanine + ATP = D-alanyl-D-alanine + ADP + phosphate + H(+). The protein operates within cell wall biogenesis; peptidoglycan biosynthesis. In terms of biological role, cell wall formation. The sequence is that of D-alanine--D-alanine ligase from Paraburkholderia phytofirmans (strain DSM 17436 / LMG 22146 / PsJN) (Burkholderia phytofirmans).